We begin with the raw amino-acid sequence, 103 residues long: Small ribosomal subunit protein bS18c (103 aa).

Belongs to the bacterial ribosomal protein bS18 family. Part of the 30S ribosomal subunit.

The protein localises to the plastid. The protein resides in the chloroplast. This is Small ribosomal subunit protein bS18c (rps18) from Chlorella vulgaris (Green alga).